The following is a 155-amino-acid chain: MNNNATHNAPNLRTLAEGVLQPLGYEVLDVQVQNPGRRPIVVIRMDRLDEQPVTVEDLETASRAVGAEFDRVDPIAGEYRLELESPGAKRPLTRARHYERMLGLKARVRGDGHSFTAPIKAVDGEQVTFDVGGEDVTLTVGTFQGNLAEFPDRHR.

This sequence belongs to the RimP family.

Its subcellular location is the cytoplasm. Its function is as follows. Required for maturation of 30S ribosomal subunits. The protein is Ribosome maturation factor RimP of Deinococcus geothermalis (strain DSM 11300 / CIP 105573 / AG-3a).